The chain runs to 140 residues: Nucleoside diphosphate kinase (140 aa).

Residues Lys-11, Phe-59, Arg-87, Thr-93, Arg-104, and Asn-114 each coordinate ATP. His-117 serves as the catalytic Pros-phosphohistidine intermediate.

It belongs to the NDK family. As to quaternary structure, homotetramer. It depends on Mg(2+) as a cofactor.

The protein resides in the cytoplasm. The enzyme catalyses a 2'-deoxyribonucleoside 5'-diphosphate + ATP = a 2'-deoxyribonucleoside 5'-triphosphate + ADP. It carries out the reaction a ribonucleoside 5'-diphosphate + ATP = a ribonucleoside 5'-triphosphate + ADP. Its function is as follows. Major role in the synthesis of nucleoside triphosphates other than ATP. The ATP gamma phosphate is transferred to the NDP beta phosphate via a ping-pong mechanism, using a phosphorylated active-site intermediate. The sequence is that of Nucleoside diphosphate kinase from Novosphingobium aromaticivorans (strain ATCC 700278 / DSM 12444 / CCUG 56034 / CIP 105152 / NBRC 16084 / F199).